Here is an 883-residue protein sequence, read N- to C-terminus: Translation initiation factor IF-2 (883 aa).

Residues 1–259 (MVDTKTPGDK…GASKQRGRLT (259 aa)) form a disordered region. Low complexity-rich tracts occupy residues 10–22 (KTLT…LTLK) and 77–89 (PRQQ…PQQS). Basic and acidic residues predominate over residues 113-184 (ARVREIEERK…GDAEPAKKPA (72 aa)). The span at 185–218 (ETSTTTTTAAPARPATTTTRTPTPAGRPPAVAAE) shows a compositional bias: low complexity. Pro residues predominate over residues 235 to 244 (PARPAPPPKQ). Residues 379-548 (PRSPVVTVMG…MIALQAEILE (170 aa)) enclose the tr-type G domain. The interval 388 to 395 (GHVDHGKT) is G1. Residue 388–395 (GHVDHGKT) coordinates GTP. The G2 stretch occupies residues 413-417 (GITQH). Residues 436–439 (DTPG) are G3. Residues 436 to 440 (DTPGH) and 490 to 493 (NKID) contribute to the GTP site. A G4 region spans residues 490-493 (NKID). Residues 526–528 (SAK) are G5.

Belongs to the TRAFAC class translation factor GTPase superfamily. Classic translation factor GTPase family. IF-2 subfamily.

It is found in the cytoplasm. In terms of biological role, one of the essential components for the initiation of protein synthesis. Protects formylmethionyl-tRNA from spontaneous hydrolysis and promotes its binding to the 30S ribosomal subunits. Also involved in the hydrolysis of GTP during the formation of the 70S ribosomal complex. The chain is Translation initiation factor IF-2 from Rhodopseudomonas palustris (strain ATCC BAA-98 / CGA009).